The sequence spans 377 residues: NADH dehydrogenase [ubiquinone] 1 alpha subcomplex subunit 9, mitochondrial (377 aa).

A mitochondrion-targeting transit peptide spans 1–35 (MAAAAQSRVVRVLSMSRSAITAIATSVCHGPPCRQ). Lys-175 carries the N6-succinyllysine modification. 2 positions are modified to N6-acetyllysine: Lys-189 and Lys-370.

The protein belongs to the complex I NDUFA9 subunit family. In terms of assembly, complex I is composed of 45 different subunits. This a component of the hydrophobic protein fraction. Interacts with BLOC1S1. Interacts with SLC2A4. Interacts with CLOCK. Interacts with RAB5IF. It depends on FAD as a cofactor. In terms of processing, acetylated on lysine residues. BLOC1S1 is required for acetylation.

Its subcellular location is the mitochondrion matrix. Accessory subunit of the mitochondrial membrane respiratory chain NADH dehydrogenase (Complex I), that is believed not to be involved in catalysis. Complex I functions in the transfer of electrons from NADH to the respiratory chain. The immediate electron acceptor for the enzyme is believed to be ubiquinone. The sequence is that of NADH dehydrogenase [ubiquinone] 1 alpha subcomplex subunit 9, mitochondrial (NDUFA9) from Gorilla gorilla gorilla (Western lowland gorilla).